The sequence spans 150 residues: FAD synthase (150 aa).

ATP contacts are provided by residues 11-12 (TF), 16-19 (HPGH), D96, and Y124.

It belongs to the archaeal FAD synthase family. Homodimer. A divalent metal cation is required as a cofactor.

The enzyme catalyses FMN + ATP + H(+) = FAD + diphosphate. The protein operates within cofactor biosynthesis; FAD biosynthesis; FAD from FMN: step 1/1. Functionally, catalyzes the transfer of the AMP portion of ATP to flavin mononucleotide (FMN) to produce flavin adenine dinucleotide (FAD) coenzyme. This is FAD synthase from Methanococcus maripaludis (strain C7 / ATCC BAA-1331).